Reading from the N-terminus, the 680-residue chain is Putative cyclin-dependent serine/threonine-protein kinase DDB_G0272797/DDB_G0274007 (680 aa).

The region spanning 4–381 is the Protein kinase domain; that stretch reads YIILSKCGQG…SLEALEHPWF (378 aa). ATP-binding positions include 10–18 and K33; that span reads CGQGTYGSV. The Proton acceptor role is filled by D125. 4 disordered regions span residues 243–299, 409–444, 483–507, and 597–680; these read QQQQ…LQSP, RQLQ…QRQH, LAQH…QHQQ, and QQQQ…KSNG. Residues 257–286 show a composition bias toward low complexity; it reads NNNNNNNNNNNNNNNNNNNNNNNNNNNNNN. Over residues 287 to 297 the composition is skewed to polar residues; it reads KYNNISTSCLQ. Composition is skewed to low complexity over residues 410–444, 483–494, and 597–616; these read QLQQ…QRQH, LAQHQQYNSQQH, and QQQQ…PPQH. A compositionally biased stretch (basic residues) spans 617–631; that stretch reads QHQHQHQHQHQHQHQ. Residues 632-642 show a composition bias toward low complexity; it reads HQPQPQHQHQP. Residues 643–655 are compositionally biased toward pro residues; sequence QPQPQPTPTPTPT. Over residues 656–680 the composition is skewed to low complexity; that stretch reads STPTTTTIPPTITTTIQPTISKSNG.

This sequence belongs to the protein kinase superfamily. CMGC Ser/Thr protein kinase family. CDC2/CDKX subfamily.

The enzyme catalyses L-seryl-[protein] + ATP = O-phospho-L-seryl-[protein] + ADP + H(+). It carries out the reaction L-threonyl-[protein] + ATP = O-phospho-L-threonyl-[protein] + ADP + H(+). The polypeptide is Putative cyclin-dependent serine/threonine-protein kinase DDB_G0272797/DDB_G0274007 (Dictyostelium discoideum (Social amoeba)).